Consider the following 780-residue polypeptide: TSC22 domain family protein 2 (780 aa).

5 disordered regions span residues 20–86 (AQVA…TVSP), 126–158 (TSAP…PTTC), 235–499 (AHGP…PGGP), 587–607 (LVGQ…PPLS), and 736–780 (LSSN…VSSA). Over residues 28-37 (EDTESLDDPD) the composition is skewed to acidic residues. Residues 126–146 (TSAPAPGAPGGPQLAGSSAGP) are compositionally biased toward low complexity. The span at 241-262 (GTDSSLTAVSQLPPSEKMSQPT) shows a compositional bias: polar residues. Low complexity-rich tracts occupy residues 297–316 (GAAT…QPQG), 344–361 (PAVG…AYPQ), and 395–412 (QPSS…ATLP). Over residues 415-434 (TGQNASSVGAQLMGASSQPS) the composition is skewed to polar residues. Over residues 453 to 468 (QPTGVPPATVGGVVQP) the composition is skewed to low complexity. The span at 736-756 (LSSNDQLSQLPTQQANPGSTS) shows a compositional bias: polar residues. Pro residues predominate over residues 765-774 (PPQPTQPPQQ).

This sequence belongs to the TSC-22/Dip/Bun family. As to quaternary structure, interacts with NRBP1. Interacts with PKM isoform M2; the interaction results in reduced nuclear levels of PKM isoform M2, leading to repression of cyclin CCND1 transcription and reduced cell growth. Interacts with WDR77.

Functionally, reduces the level of nuclear PKM isoform M2 which results in repression of cyclin CCND1 transcription and reduced cell growth. The polypeptide is TSC22 domain family protein 2 (Homo sapiens (Human)).